A 348-amino-acid polypeptide reads, in one-letter code: MARVSENLSEKMKALEVALSSIEKRFGKGAVMPLKAVETVEVETIPTGSISLDIATGVGGIPKGRITEIFGVESSGKTTLALHVIAEAQKRGGVAVFIDAEHALDPKYAKKLGVDVDNLYISQPDYGEQALEIAESLINSGAVDVIVVDSVAALVPKDELEGEMGEAQVGKQARLMSQALRKLKGAVHRSNTALIFINQIREKIGVMFGNPETTPGGRALKFFSDMRLEVRRLGDVKEGGEKKGYRVKVRVVKNKLAPPFQEAEFDVIYGEGICRICDIIDTAANLGVITKSGSWYSYGEKRLGQGREQAKKYLLEHPEMLEEIERKVREVSGLVRPDTENSVGEKSE.

71-78 lines the ATP pocket; sequence GVESSGKT.

This sequence belongs to the RecA family.

The protein localises to the cytoplasm. In terms of biological role, can catalyze the hydrolysis of ATP in the presence of single-stranded DNA, the ATP-dependent uptake of single-stranded DNA by duplex DNA, and the ATP-dependent hybridization of homologous single-stranded DNAs. It interacts with LexA causing its activation and leading to its autocatalytic cleavage. This chain is Protein RecA, found in Aquifex pyrophilus.